The primary structure comprises 523 residues: Cytochrome P450 CYP82J17 (523 aa).

A helical membrane pass occupies residues Phe4 to Trp24. Cys462 contributes to the heme binding site.

Belongs to the cytochrome P450 family. As to expression, mainly expressed in leaves and seed pods and, to a lower extent, in flowers and stems.

The protein resides in the membrane. It participates in steroid metabolism; cholesterol metabolism. Involved in the biosynthesis of spiroketal steroid and saponin natural products from cholesterol such as diosgenin and analogs (e.g. furostanol and spirostanol), plant defense compounds used as main precursors for the industrial production of steroid hormones. During the 5,6-spiroketalization of cholesterol, may catalyze the 27-monohydroxylation of furostanol-type steroid to an intermediate product that undergoes a stereospecific formation of the terminal heterocycle to yield diosgenin. The protein is Cytochrome P450 CYP82J17 of Trigonella foenum-graecum (Fenugreek).